The following is a 253-amino-acid chain: 2-C-methyl-D-erythritol 4-phosphate cytidylyltransferase (253 aa).

The segment at 1–28 is disordered; sequence MSVSSRPGRRRFALIPSAGTGTRAGGDL.

It belongs to the IspD/TarI cytidylyltransferase family. IspD subfamily.

The catalysed reaction is 2-C-methyl-D-erythritol 4-phosphate + CTP + H(+) = 4-CDP-2-C-methyl-D-erythritol + diphosphate. The protein operates within isoprenoid biosynthesis; isopentenyl diphosphate biosynthesis via DXP pathway; isopentenyl diphosphate from 1-deoxy-D-xylulose 5-phosphate: step 2/6. Functionally, catalyzes the formation of 4-diphosphocytidyl-2-C-methyl-D-erythritol from CTP and 2-C-methyl-D-erythritol 4-phosphate (MEP). The polypeptide is 2-C-methyl-D-erythritol 4-phosphate cytidylyltransferase (Ralstonia nicotianae (strain ATCC BAA-1114 / GMI1000) (Ralstonia solanacearum)).